The sequence spans 99 residues: Nucleoid-associated protein EbfC (99 aa).

Belongs to the YbaB/EbfC family. Homodimer.

The protein resides in the cytoplasm. Its subcellular location is the nucleoid. In terms of biological role, binds to DNA and alters its conformation. May be involved in regulation of gene expression, nucleoid organization and DNA protection. The polypeptide is Nucleoid-associated protein EbfC (Borrelia turicatae (strain 91E135)).